A 214-amino-acid chain; its full sequence is A-type ATP synthase subunit D (214 aa).

The protein belongs to the V-ATPase D subunit family. As to quaternary structure, has multiple subunits with at least A(3), B(3), C, D, E, F, H, I and proteolipid K(x).

Its subcellular location is the cell membrane. Component of the A-type ATP synthase that produces ATP from ADP in the presence of a proton gradient across the membrane. In Desulfurococcus sp. (strain SY), this protein is A-type ATP synthase subunit D.